The following is a 182-amino-acid chain: Thioredoxin F-type, chloroplastic (182 aa).

Positions 1–22 are disordered; it reads MPLSLRLAPSPTALSPTTGGFS. Residues 52–177 enclose the Thioredoxin domain; it reads KRGDSSVVRC…LVAAIETARS (126 aa). Active-site nucleophile residues include Cys102 and Cys105. Cys102 and Cys105 are disulfide-bonded.

It belongs to the thioredoxin family. Plant F-type subfamily. As to quaternary structure, forms a complex with heterodimeric ferredoxin-thioredoxin reductase (FTR) and ferredoxin.

The protein localises to the plastid. The protein resides in the chloroplast. Its function is as follows. Participates in various redox reactions through the reversible oxidation of the active center dithiol to a disulfide. The F form is known to activate a number of enzymes of the photosynthetic carbon cycle. The sequence is that of Thioredoxin F-type, chloroplastic (TRXF) from Brassica napus (Rape).